Here is a 444-residue protein sequence, read N- to C-terminus: MALMVKAEGGNGGKRWDDGFDYEGVTKIYVRGGLEGIQFIKFDYVKDGKTITGPIHGVSGRGLTQTFEINHLQKEYLLSIEGYYDISTGVIQSIQFKTNQQTSDMMGFNEGTKFSLRSMRGRIIGFHGFADKNLYSLRAYYIRIPATKSAMDGGQNTGRGYDHGGDYDGVRKVYVTFDGTSIRNMRVDYDKVGQVECYEYGVKIGTQNQFTINYPYECITSVGGSYADTQPYRCIVLRSLTFKTSNGRTSVFGKETGTTFLLESQGNAIVGFHGRVGSCVDSIGEYYAPFSPYPPPTEKLEGQGGDGGDSWDDGAFLNVKKVCIGQGQFGIVSVKFEYENDASEVVVGDEHGKATLLGYEEFELDYPSEYITSVEACQDKVMGAETGVLTMLRFKTNIRISPSFGLKAGFNFVLEKEGHKINGFHGKSSSMLHQIGIHVIPITE.

A2 carries the post-translational modification N-acetylalanine. 3 consecutive Jacalin-type lectin domains span residues A2–R143, A146–P289, and T297–P441.

It belongs to the jacalin lectin family.

This is Jacalin-related lectin 42 (JAL42) from Arabidopsis thaliana (Mouse-ear cress).